Consider the following 597-residue polypeptide: NADPH-dependent diflavin oxidoreductase 1 (597 aa).

In terms of domain architecture, Flavodoxin-like spans 6–150 (LLVLFGSQTG…AVDPWLRDLW (145 aa)). FMN-binding positions include 12–17 (SQTGTA), 59–62 (ATTG), 97–106 (LGDSSYAKFN), and Asp132. The segment at 188 to 207 (GSEGQRVAHPGSQEPPSESK) is disordered. The FAD-binding FR-type domain occupies 206-447 (SKPFLAPMIS…VRPGSLAFPE (242 aa)). Residues Arg350, 382 to 385 (RAFS), and 416 to 419 (GLCS) contribute to the FAD site. NADP(+) is bound by residues Thr460, 515 to 516 (SR), 521 to 525 (KVYVQ), and Asp558. Residue Trp596 participates in FAD binding.

The protein belongs to the NADPH-dependent diflavin oxidoreductase NDOR1 family. This sequence in the N-terminal section; belongs to the flavodoxin family. It in the C-terminal section; belongs to the flavoprotein pyridine nucleotide cytochrome reductase family. As to quaternary structure, interacts with CIAPIN1; as part of the cytosolic iron-sulfur (Fe-S) protein assembly (CIA) machinery. Interacts with DCPS. It depends on FAD as a cofactor. Requires FMN as cofactor. As to expression, low expression in brain, heart, kidney, pancreas, prostate and skeletal muscle. Highest levels in the placenta. Expressed in cancer cell lines including promyelocytic leukemia, HeLaS3, chronic myelagenous leukemia, lymphoblastic leukemia, Burkitt's lymphoma, colorectal adenocarcinoma, lung carcinoma, and melanoma G-361.

Its subcellular location is the cytoplasm. It is found in the perinuclear region. The enzyme catalyses 2 oxidized [2Fe-2S]-[protein] + NADPH = 2 reduced [2Fe-2S]-[protein] + NADP(+) + H(+). In terms of biological role, NADPH-dependent reductase which is a central component of the cytosolic iron-sulfur (Fe-S) protein assembly (CIA) machinery. Transfers electrons from NADPH via its FAD and FMN prosthetic groups to the [2Fe-2S] cluster of CIAPIN1, another key component of the CIA machinery. In turn, this reduced cluster provides electrons for assembly of cytosolic iron-sulfur cluster proteins. It can also reduce the [2Fe-2S] cluster of CISD1 and activate this protein implicated in Fe/S cluster repair. In vitro can fully activate methionine synthase/MTR in the presence of soluble cytochrome b5/CYB5A. The chain is NADPH-dependent diflavin oxidoreductase 1 from Homo sapiens (Human).